The sequence spans 37 residues: Kappa-actitoxin-Bcs3b (37 aa).

The ShKT domain occupies 2–37 (CKDGFPTATCQHAKLVGNCKNSQKYRANCAKTCGPC). 3 disulfide bridges follow: Cys2–Cys37, Cys11–Cys30, and Cys20–Cys34. The interval 25 to 26 (KY) is crucial for binding to potassium channels.

It belongs to the sea anemone type 1 potassium channel toxin family. Type 1b subfamily.

It is found in the secreted. The protein resides in the nematocyst. Functionally, inhibits voltage-gated potassium channels (IC(50)=14.42 nM for rKCNA1/Kv1.1, IC(50)=80.4 nM for rKCNA2/Kv1.2, IC(50)=7.76 nM for rKCNA6/Kv1.6, IC(50)=13.12 nM for hKCNA3/Kv1.3, and IC(50)=49.14 nM for insect Shaker IR). Binds the Shaker IR channels in a voltage-independent manner. The sequence is that of Kappa-actitoxin-Bcs3b from Bunodosoma caissarum (Sea anemone).